Here is a 314-residue protein sequence, read N- to C-terminus: Ribosomal RNA small subunit methyltransferase H (314 aa).

Residues 34–36 (GGH), aspartate 53, phenylalanine 82, aspartate 103, and glutamine 110 each bind S-adenosyl-L-methionine.

This sequence belongs to the methyltransferase superfamily. RsmH family.

It localises to the cytoplasm. It carries out the reaction cytidine(1402) in 16S rRNA + S-adenosyl-L-methionine = N(4)-methylcytidine(1402) in 16S rRNA + S-adenosyl-L-homocysteine + H(+). Specifically methylates the N4 position of cytidine in position 1402 (C1402) of 16S rRNA. The polypeptide is Ribosomal RNA small subunit methyltransferase H (Limosilactobacillus fermentum (strain NBRC 3956 / LMG 18251) (Lactobacillus fermentum)).